We begin with the raw amino-acid sequence, 165 residues long: Calcium-binding protein H (165 aa).

EF-hand domains are found at residues 7–42, 43–78, 88–123, and 124–159; these read QIEKDVEKIIGQYDGDKNGEVTINEAIEFFKRMGSK, YPEKCAIVLFKMYDLDNEGKISYDEIQEEIFKRYQD, YFQDDIEAFLLRYDKNRDNRIDFKELEQCFESIGSD, and HPKENANHIFTEIDKNRDGYLTIAEIKNYCRNTIRS. Residues Asp-20, Asp-22, Asn-24, Glu-26, Glu-31, Asp-56, Asp-58, Glu-60, Lys-62, Glu-67, Asp-101, Asn-103, Asp-105, Arg-107, Glu-112, Asp-137, Asn-139, Asp-141, Tyr-143, and Glu-148 each coordinate Ca(2+).

The sequence is that of Calcium-binding protein H (cbpH) from Dictyostelium discoideum (Social amoeba).